The sequence spans 92 residues: Small ribosomal subunit protein uS19 (92 aa).

The protein belongs to the universal ribosomal protein uS19 family.

Its function is as follows. Protein S19 forms a complex with S13 that binds strongly to the 16S ribosomal RNA. The polypeptide is Small ribosomal subunit protein uS19 (Gloeobacter violaceus (strain ATCC 29082 / PCC 7421)).